The sequence spans 270 residues: Glutamate racemase (270 aa).

Residues 7 to 8 (DS) and 39 to 40 (YG) contribute to the substrate site. The active-site Proton donor/acceptor is the C70. 71 to 72 (NT) serves as a coordination point for substrate. The Proton donor/acceptor role is filled by C194. 195–196 (TH) contributes to the substrate binding site.

Belongs to the aspartate/glutamate racemases family.

The enzyme catalyses L-glutamate = D-glutamate. It participates in cell wall biogenesis; peptidoglycan biosynthesis. Its function is as follows. Provides the (R)-glutamate required for cell wall biosynthesis. The protein is Glutamate racemase of Paracoccus denitrificans (strain Pd 1222).